Here is a 496-residue protein sequence, read N- to C-terminus: Cobyric acid synthase (496 aa).

Residues 264 to 458 (HTRIAVVAYP…LHGLFEDAAV (195 aa)) form the GATase cobBQ-type domain. C345 acts as the Nucleophile in catalysis. H450 is an active-site residue.

This sequence belongs to the CobB/CobQ family. CobQ subfamily.

It participates in cofactor biosynthesis; adenosylcobalamin biosynthesis. Functionally, catalyzes amidations at positions B, D, E, and G on adenosylcobyrinic A,C-diamide. NH(2) groups are provided by glutamine, and one molecule of ATP is hydrogenolyzed for each amidation. The polypeptide is Cobyric acid synthase (Acidovorax ebreus (strain TPSY) (Diaphorobacter sp. (strain TPSY))).